The following is a 904-amino-acid chain: Exo-beta-D-glucosaminidase (904 aa).

Positions methionine 1 to alanine 32 are cleaved as a signal peptide. The tract at residues alanine 28–glycine 49 is disordered. Residue aspartate 476 is the Proton donor of the active site. Catalysis depends on glutamate 545, which acts as the Nucleophile. Over residues serine 813–valine 828 the composition is skewed to low complexity. The segment at serine 813 to serine 833 is disordered.

This sequence belongs to the glycosyl hydrolase 2 family. As to quaternary structure, monomer.

It is found in the secreted. It carries out the reaction Hydrolysis of chitosan or chitosan oligosaccharides to remove successive D-glucosamine residues from the non-reducing termini.. Its function is as follows. Hydrolyzes chitosan and chitooligosaccharides with retention of anomeric configuration. Has no beta-mannosidase activity. This chain is Exo-beta-D-glucosaminidase, found in Streptomyces avermitilis (strain ATCC 31267 / DSM 46492 / JCM 5070 / NBRC 14893 / NCIMB 12804 / NRRL 8165 / MA-4680).